Reading from the N-terminus, the 445-residue chain is Exodeoxyribonuclease 7 large subunit (445 aa).

It belongs to the XseA family. In terms of assembly, heterooligomer composed of large and small subunits.

Its subcellular location is the cytoplasm. The catalysed reaction is Exonucleolytic cleavage in either 5'- to 3'- or 3'- to 5'-direction to yield nucleoside 5'-phosphates.. Functionally, bidirectionally degrades single-stranded DNA into large acid-insoluble oligonucleotides, which are then degraded further into small acid-soluble oligonucleotides. This is Exodeoxyribonuclease 7 large subunit from Staphylococcus haemolyticus (strain JCSC1435).